The following is a 272-amino-acid chain: 3-methyl-2-oxobutanoate hydroxymethyltransferase (272 aa).

Mg(2+)-binding residues include Asp43 and Asp82. 3-methyl-2-oxobutanoate-binding positions include 43–44 (DS), Asp82, and Lys112. Glu114 is a binding site for Mg(2+). The active-site Proton acceptor is the Glu179.

The protein belongs to the PanB family. In terms of assembly, homodecamer; pentamer of dimers. Mg(2+) is required as a cofactor.

The protein resides in the cytoplasm. It carries out the reaction 3-methyl-2-oxobutanoate + (6R)-5,10-methylene-5,6,7,8-tetrahydrofolate + H2O = 2-dehydropantoate + (6S)-5,6,7,8-tetrahydrofolate. Its pathway is cofactor biosynthesis; (R)-pantothenate biosynthesis; (R)-pantoate from 3-methyl-2-oxobutanoate: step 1/2. In terms of biological role, catalyzes the reversible reaction in which hydroxymethyl group from 5,10-methylenetetrahydrofolate is transferred onto alpha-ketoisovalerate to form ketopantoate. The sequence is that of 3-methyl-2-oxobutanoate hydroxymethyltransferase from Staphylococcus aureus (strain bovine RF122 / ET3-1).